The following is a 163-amino-acid chain: Glycine cleavage system H-like protein gcvH5, mitochondrial (163 aa).

The N-terminal 23 residues, 1–23 (MFLFKTTNNLRKSLSNKFFCTRY), are a transit peptide targeting the mitochondrion. The 87-residue stretch at 50-136 (IGTLGLTENG…MSKGWLCKIK (87 aa)) folds into the Lipoyl-binding domain.

This sequence belongs to the GcvH family.

It is found in the mitochondrion. The protein is Glycine cleavage system H-like protein gcvH5, mitochondrial (gcvH5) of Dictyostelium discoideum (Social amoeba).